Reading from the N-terminus, the 470-residue chain is Calmodulin-binding receptor-like cytoplasmic kinase 1 (470 aa).

2 disordered regions span residues Met1 to Asp29 and Pro65 to Trp128. Residues Pro65–Ser82 are compositionally biased toward basic and acidic residues. Composition is skewed to polar residues over residues Thr83–Arg98 and Tyr108–Asp121. A Protein kinase domain is found at Phe147–Ala423. ATP is bound by residues Ile153–Val161 and Lys175. Residues Phe162 to Ser185 form a caM-binding region. The Proton acceptor role is filled by Asp273. Phosphoserine occurs at positions 277 and 308. The residue at position 309 (Thr309) is a Phosphothreonine. Tyr322 is subject to Phosphotyrosine.

It belongs to the protein kinase superfamily. Ser/Thr protein kinase family. Interacts with calmodulin (CaM) in a Ca(2+)-dependent manner. Mg(2+) serves as cofactor. Autophosphorylated.

The protein resides in the cytoplasm. It catalyses the reaction L-seryl-[protein] + ATP = O-phospho-L-seryl-[protein] + ADP + H(+). It carries out the reaction L-threonyl-[protein] + ATP = O-phospho-L-threonyl-[protein] + ADP + H(+). Its activity is regulated as follows. Up-regulated by Ca(2+)/CaM. The sequence is that of Calmodulin-binding receptor-like cytoplasmic kinase 1 (CRCK1) from Arabidopsis thaliana (Mouse-ear cress).